A 975-amino-acid chain; its full sequence is Glycine dehydrogenase (decarboxylating) (975 aa).

An N6-(pyridoxal phosphate)lysine modification is found at lysine 723.

This sequence belongs to the GcvP family. The glycine cleavage system is composed of four proteins: P, T, L and H. The cofactor is pyridoxal 5'-phosphate.

It carries out the reaction N(6)-[(R)-lipoyl]-L-lysyl-[glycine-cleavage complex H protein] + glycine + H(+) = N(6)-[(R)-S(8)-aminomethyldihydrolipoyl]-L-lysyl-[glycine-cleavage complex H protein] + CO2. The glycine cleavage system catalyzes the degradation of glycine. The P protein binds the alpha-amino group of glycine through its pyridoxal phosphate cofactor; CO(2) is released and the remaining methylamine moiety is then transferred to the lipoamide cofactor of the H protein. The polypeptide is Glycine dehydrogenase (decarboxylating) (Burkholderia orbicola (strain MC0-3)).